Consider the following 69-residue polypeptide: Amphipathic peptide CT2 (69 aa).

A signal peptide spans 1–23; it reads MKTQFVILIVAVVLLQLIANSEA. Residue Phe36 is modified to Phenylalanine amide. The propeptide occupies 40-69; it reads GLRNLDNLDDDIFEPEMSEADLRYLQDLLR.

Belongs to the non-disulfide-bridged peptide (NDBP) superfamily. Short antimicrobial peptide (group 4) family. In terms of tissue distribution, expressed by the venom gland.

It is found in the secreted. The protein resides in the target cell membrane. In terms of biological role, amphipathic peptide that shows antibacterial activities against both Gram-positive (MIC=10 uM, 20 uM and 20 uM against S.aureus, B.subtilis and S.agalactiae, respectively) and Gram-negative bacteria (MIC=20 uM, 10 uM, and 10 uM against E.coli, S.typhi, and P.aeruginosa, respectively). Is mildly hemolytic at its MIC range, but shows a strong cytotoxic activity at higher concentrations, reaching 84% lysis at 50 uM. In Vaejovis mexicanus smithi (Mexican scorpion), this protein is Amphipathic peptide CT2.